Consider the following 420-residue polypeptide: UDP-N-acetylglucosamine 1-carboxyvinyltransferase (420 aa).

Phosphoenolpyruvate is bound at residue K22–N23. Position 92 (R92) interacts with UDP-N-acetyl-alpha-D-glucosamine. The Proton donor role is filled by C116. The residue at position 116 (C116) is a 2-(S-cysteinyl)pyruvic acid O-phosphothioketal. UDP-N-acetyl-alpha-D-glucosamine-binding positions include R121–L125, D307, and L329.

Belongs to the EPSP synthase family. MurA subfamily.

The protein resides in the cytoplasm. It carries out the reaction phosphoenolpyruvate + UDP-N-acetyl-alpha-D-glucosamine = UDP-N-acetyl-3-O-(1-carboxyvinyl)-alpha-D-glucosamine + phosphate. The protein operates within cell wall biogenesis; peptidoglycan biosynthesis. Functionally, cell wall formation. Adds enolpyruvyl to UDP-N-acetylglucosamine. The polypeptide is UDP-N-acetylglucosamine 1-carboxyvinyltransferase (Nitratiruptor sp. (strain SB155-2)).